The following is a 185-amino-acid chain: Elongation factor P (185 aa).

Belongs to the elongation factor P family.

It is found in the cytoplasm. Its pathway is protein biosynthesis; polypeptide chain elongation. Involved in peptide bond synthesis. Stimulates efficient translation and peptide-bond synthesis on native or reconstituted 70S ribosomes in vitro. Probably functions indirectly by altering the affinity of the ribosome for aminoacyl-tRNA, thus increasing their reactivity as acceptors for peptidyl transferase. The polypeptide is Elongation factor P (Metamycoplasma arthritidis (strain 158L3-1) (Mycoplasma arthritidis)).